A 277-amino-acid polypeptide reads, in one-letter code: Putative acetylornithine deacetylase (277 aa).

The enzyme catalyses N(2)-acetyl-L-ornithine + H2O = L-ornithine + acetate. The protein operates within amino-acid biosynthesis; L-arginine biosynthesis; L-ornithine from N(2)-acetyl-L-ornithine (linear): step 1/1. The chain is Putative acetylornithine deacetylase (argE) from Leptospira biflexa.